The sequence spans 1403 residues: Nidogen-2 (1403 aa).

An N-terminal signal peptide occupies residues 1-30 (MFRDPTAGWLTPPSPLSLLVMLLLLSRVGA). In terms of domain architecture, NIDO spans 108–274 (PFLADIDTSH…GVWAFHIGSR (167 aa)). The tract at residues 323–403 (EDVEYPPVEP…KQGRPVGEGE (81 aa)) is disordered. 2 O-linked (Xyl...) (chondroitin sulfate) serine glycosylation sites follow: serine 386 and serine 475. Positions 386 to 395 (SASLDPQTKQ) are enriched in polar residues. Residues 507–547 (NLETCEHSHGRCSQHAFCTDYTTGFCCHCQSRFYGNGKHCL) form the EGF-like 1 domain. 3 disulfides stabilise this stretch: cysteine 511–cysteine 524, cysteine 518–cysteine 533, and cysteine 535–cysteine 546. Residues 551-781 (APHRVNGKVS…GPVEVDSAPV (231 aa)) form the Nidogen G2 beta-barrel domain. 3 N-linked (GlcNAc...) asparagine glycosylation sites follow: asparagine 681, asparagine 716, and asparagine 726. The EGF-like 2 domain maps to 782 to 823 (GVNPCYDGSHTCDTTARCHPGTGVDYTCECTPGFQGDGRSCV). Intrachain disulfides connect cysteine 786/cysteine 799, cysteine 793/cysteine 809, cysteine 811/cysteine 822, cysteine 828/cysteine 841, cysteine 835/cysteine 850, cysteine 852/cysteine 865, cysteine 875/cysteine 890, cysteine 882/cysteine 900, cysteine 902/cysteine 913, cysteine 919/cysteine 930, cysteine 924/cysteine 939, cysteine 941/cysteine 952, cysteine 968/cysteine 991, cysteine 1002/cysteine 1009, cysteine 1011/cysteine 1033, cysteine 1047/cysteine 1071, cysteine 1082/cysteine 1089, and cysteine 1091/cysteine 1112. The EGF-like 3; calcium-binding domain occupies 824-862 (DVNECATGFHRCGPNSVCVNLVGSYRCECRSGYEFADDQ). The EGF-like 4 domain maps to 871 to 914 (PPNPCLDGSHTCAPEGQARCIHHGGSSFSCACLPGFIGTGHQCS). One can recognise an EGF-like 5; calcium-binding domain in the interval 915–953 (DVDECAENRCHEAAICYNTPGSFSCRCQPGYRGDGFHCT). Residues 946–948 (RGD) carry the Cell attachment site motif. 2 consecutive Thyroglobulin type-1 domains span residues 965-1033 (LKPC…PPHC) and 1044-1112 (RTVC…RPAC). Positions 1021–1043 (GTQTPPGSTPPHCGPPPEPTQRP) are disordered. Residues 1027–1040 (GSTPPHCGPPPEPT) are compositionally biased toward pro residues. A glycan (N-linked (GlcNAc...) asparagine) is linked at asparagine 1152. LDL-receptor class B repeat units lie at residues 1182 to 1225 (RMVY…DHFR), 1226 to 1268 (RTMY…DPIR), 1269 to 1313 (GNLY…DPFS), 1314 to 1355 (KLLC…YADH), and 1357 to 1401 (YHTD…CPTG). The residue at position 1336 (arginine 1336) is an Omega-N-methylarginine.

In terms of assembly, interacts with LAMA2. Interacts with COL13A1. Interacts with EFEMP2. Post-translationally, highly N- and O-glycosylated.

It is found in the secreted. It localises to the extracellular space. The protein localises to the extracellular matrix. Its subcellular location is the basement membrane. Its function is as follows. Cell adhesion glycoprotein. Might be involved in osteoblast differentiation. It probably has a role in cell-extracellular matrix interactions. This chain is Nidogen-2 (Nid2), found in Mus musculus (Mouse).